The following is a 712-amino-acid chain: Polyribonucleotide nucleotidyltransferase (712 aa).

Positions 487 and 493 each coordinate Mg(2+). The KH domain occupies 554 to 613 (PRIEVMNIPVDKIREVIGSGGKVIREIVEKTGAKINIEDDGTVKIASSSGKEIEAARKWI). The region spanning 623–691 (GQIYEGTVVK…ERGKVRLSMK (69 aa)) is the S1 motif domain.

The protein belongs to the polyribonucleotide nucleotidyltransferase family. The cofactor is Mg(2+).

The protein localises to the cytoplasm. It carries out the reaction RNA(n+1) + phosphate = RNA(n) + a ribonucleoside 5'-diphosphate. Involved in mRNA degradation. Catalyzes the phosphorolysis of single-stranded polyribonucleotides processively in the 3'- to 5'-direction. The protein is Polyribonucleotide nucleotidyltransferase of Rhizobium leguminosarum bv. trifolii (strain WSM2304).